A 275-amino-acid polypeptide reads, in one-letter code: Bis(5'-nucleosyl)-tetraphosphatase, symmetrical (275 aa).

The protein belongs to the Ap4A hydrolase family.

It carries out the reaction P(1),P(4)-bis(5'-adenosyl) tetraphosphate + H2O = 2 ADP + 2 H(+). In terms of biological role, hydrolyzes diadenosine 5',5'''-P1,P4-tetraphosphate to yield ADP. The chain is Bis(5'-nucleosyl)-tetraphosphatase, symmetrical from Haemophilus influenzae (strain PittGG).